Here is a 625-residue protein sequence, read N- to C-terminus: DNA-directed RNA polymerase subunit gamma (625 aa).

Zn(2+) contacts are provided by Cys-71, Cys-73, Cys-86, and Cys-89. Mg(2+)-binding residues include Asp-467, Asp-469, and Asp-471.

It belongs to the RNA polymerase beta' chain family. RpoC1 subfamily. As to quaternary structure, in cyanobacteria the RNAP catalytic core is composed of 2 alpha, 1 beta, 1 beta', 1 gamma and 1 omega subunit. When a sigma factor is associated with the core the holoenzyme is formed, which can initiate transcription. The cofactor is Mg(2+). Zn(2+) serves as cofactor.

The catalysed reaction is RNA(n) + a ribonucleoside 5'-triphosphate = RNA(n+1) + diphosphate. Its function is as follows. DNA-dependent RNA polymerase catalyzes the transcription of DNA into RNA using the four ribonucleoside triphosphates as substrates. This is DNA-directed RNA polymerase subunit gamma from Trichormus variabilis (strain ATCC 29413 / PCC 7937) (Anabaena variabilis).